The primary structure comprises 501 residues: ATP synthase subunit alpha (501 aa).

169–176 (GDRQTGKT) lines the ATP pocket.

The protein belongs to the ATPase alpha/beta chains family. As to quaternary structure, F-type ATPases have 2 components, CF(1) - the catalytic core - and CF(0) - the membrane proton channel. CF(1) has five subunits: alpha(3), beta(3), gamma(1), delta(1), epsilon(1). CF(0) has three main subunits: a(1), b(2) and c(9-12). The alpha and beta chains form an alternating ring which encloses part of the gamma chain. CF(1) is attached to CF(0) by a central stalk formed by the gamma and epsilon chains, while a peripheral stalk is formed by the delta and b chains.

Its subcellular location is the cell inner membrane. The catalysed reaction is ATP + H2O + 4 H(+)(in) = ADP + phosphate + 5 H(+)(out). In terms of biological role, produces ATP from ADP in the presence of a proton gradient across the membrane. The alpha chain is a regulatory subunit. This chain is ATP synthase subunit alpha, found in Campylobacter jejuni subsp. doylei (strain ATCC BAA-1458 / RM4099 / 269.97).